Consider the following 290-residue polypeptide: uncharacterized protein (290 aa).

The first 25 residues, 1 to 25 (MNKKSILSKTSLGSLFFLFGTALSA), serve as a signal peptide directing secretion. A lipid anchor (N-palmitoyl cysteine) is attached at Cys-26. A lipid anchor (S-diacylglycerol cysteine) is attached at Cys-26. Residues 183 to 203 (GTDSKGSGSNNQNGGVTEKDF) form a disordered region. A compositionally biased stretch (low complexity) spans 186-197 (SKGSGSNNQNGG).

Belongs to the MG439/MG440 family.

The protein localises to the cell membrane. This is an uncharacterized protein from Mycoplasma pneumoniae (strain ATCC 29342 / M129 / Subtype 1) (Mycoplasmoides pneumoniae).